A 332-amino-acid chain; its full sequence is Lipoyl synthase (332 aa).

[4Fe-4S] cluster-binding residues include Cys-74, Cys-79, Cys-85, Cys-100, Cys-104, Cys-107, and Ser-314. The 219-residue stretch at Cys-85–Ser-303 folds into the Radical SAM core domain.

Belongs to the radical SAM superfamily. Lipoyl synthase family. Requires [4Fe-4S] cluster as cofactor.

It localises to the cytoplasm. It carries out the reaction [[Fe-S] cluster scaffold protein carrying a second [4Fe-4S](2+) cluster] + N(6)-octanoyl-L-lysyl-[protein] + 2 oxidized [2Fe-2S]-[ferredoxin] + 2 S-adenosyl-L-methionine + 4 H(+) = [[Fe-S] cluster scaffold protein] + N(6)-[(R)-dihydrolipoyl]-L-lysyl-[protein] + 4 Fe(3+) + 2 hydrogen sulfide + 2 5'-deoxyadenosine + 2 L-methionine + 2 reduced [2Fe-2S]-[ferredoxin]. It participates in protein modification; protein lipoylation via endogenous pathway; protein N(6)-(lipoyl)lysine from octanoyl-[acyl-carrier-protein]: step 2/2. Catalyzes the radical-mediated insertion of two sulfur atoms into the C-6 and C-8 positions of the octanoyl moiety bound to the lipoyl domains of lipoate-dependent enzymes, thereby converting the octanoylated domains into lipoylated derivatives. This chain is Lipoyl synthase, found in Polaromonas naphthalenivorans (strain CJ2).